We begin with the raw amino-acid sequence, 499 residues long: UDP-N-acetylmuramoylalanine--D-glutamate ligase (499 aa).

Residue glycine 120–threonine 126 participates in ATP binding.

The protein belongs to the MurCDEF family.

The protein localises to the cytoplasm. It carries out the reaction UDP-N-acetyl-alpha-D-muramoyl-L-alanine + D-glutamate + ATP = UDP-N-acetyl-alpha-D-muramoyl-L-alanyl-D-glutamate + ADP + phosphate + H(+). The protein operates within cell wall biogenesis; peptidoglycan biosynthesis. In terms of biological role, cell wall formation. Catalyzes the addition of glutamate to the nucleotide precursor UDP-N-acetylmuramoyl-L-alanine (UMA). The chain is UDP-N-acetylmuramoylalanine--D-glutamate ligase from Nostoc punctiforme (strain ATCC 29133 / PCC 73102).